A 213-amino-acid polypeptide reads, in one-letter code: Adenylate kinase (213 aa).

ATP is bound at residue 10 to 15; the sequence is GAGKGT. The segment at 30–59 is NMP; it reads STGDIFRANIKNNTELGQKAKTYMDKGELV. Residues threonine 31, arginine 36, 57-59, 85-88, and glutamine 92 each bind AMP; these read ELV and GFPR. The segment at 126 to 163 is LID; sequence GRRACVGCGATYHIQFNPTKVEGICDACGEKLILRDDD. Arginine 127 contributes to the ATP binding site. Zn(2+)-binding residues include cysteine 130 and cysteine 133. 136 to 137 is an ATP binding site; the sequence is TY. Residues cysteine 150 and cysteine 153 each contribute to the Zn(2+) site. AMP contacts are provided by arginine 160 and arginine 171. Residue glutamine 199 coordinates ATP.

The protein belongs to the adenylate kinase family. In terms of assembly, monomer.

The protein resides in the cytoplasm. The catalysed reaction is AMP + ATP = 2 ADP. It functions in the pathway purine metabolism; AMP biosynthesis via salvage pathway; AMP from ADP: step 1/1. In terms of biological role, catalyzes the reversible transfer of the terminal phosphate group between ATP and AMP. Plays an important role in cellular energy homeostasis and in adenine nucleotide metabolism. The protein is Adenylate kinase of Lachnospira eligens (strain ATCC 27750 / DSM 3376 / VPI C15-48 / C15-B4) (Eubacterium eligens).